We begin with the raw amino-acid sequence, 204 residues long: Peptide deformylase (204 aa).

Fe cation-binding residues include Cys131 and His174. Glu175 is an active-site residue. His178 provides a ligand contact to Fe cation.

Belongs to the polypeptide deformylase family. Fe(2+) serves as cofactor.

The enzyme catalyses N-terminal N-formyl-L-methionyl-[peptide] + H2O = N-terminal L-methionyl-[peptide] + formate. Removes the formyl group from the N-terminal Met of newly synthesized proteins. Requires at least a dipeptide for an efficient rate of reaction. N-terminal L-methionine is a prerequisite for activity but the enzyme has broad specificity at other positions. The polypeptide is Peptide deformylase (Streptococcus gordonii (strain Challis / ATCC 35105 / BCRC 15272 / CH1 / DL1 / V288)).